Reading from the N-terminus, the 171-residue chain is Large ribosomal subunit protein uL10 (171 aa).

The protein belongs to the universal ribosomal protein uL10 family. As to quaternary structure, part of the ribosomal stalk of the 50S ribosomal subunit. The N-terminus interacts with L11 and the large rRNA to form the base of the stalk. The C-terminus forms an elongated spine to which L12 dimers bind in a sequential fashion forming a multimeric L10(L12)X complex.

Its function is as follows. Forms part of the ribosomal stalk, playing a central role in the interaction of the ribosome with GTP-bound translation factors. This is Large ribosomal subunit protein uL10 from Lactococcus lactis subsp. cremoris (strain SK11).